A 158-amino-acid polypeptide reads, in one-letter code: UPF0758 protein YkfG (158 aa).

Positions 36 to 158 (AFTSTHAVRE…IYSFAEHGLL (123 aa)) constitute an MPN domain. Zn(2+) contacts are provided by His107, His109, and Asp120. The short motif at 107-120 (HNHPSGETTPSQAD) is the JAMM motif element.

The protein belongs to the UPF0758 family.

The protein is UPF0758 protein YkfG (ykfG) of Escherichia coli (strain K12).